The sequence spans 364 residues: Melatonin receptor type 1B (364 aa).

At 1–42 the chain is on the extracellular side; sequence MPENSSIPNCCEASGLAARPSWSGSAGARPPVTARAPWVAPM. N-linked (GlcNAc...) asparagine glycosylation is present at asparagine 4. The helical transmembrane segment at 43 to 63 threads the bilayer; it reads LSTVVVVTTAVDFVGNLLVIL. Over 64–76 the chain is Cytoplasmic; that stretch reads SVLRNRKLRNAGN. Residues 77–97 traverse the membrane as a helical segment; the sequence is LFVVSLALADLVIALYPYPLI. Residues 98-115 are Extracellular-facing; sequence LVAIIRDGWVLGEAHCKA. A disulfide bridge links cysteine 113 with cysteine 190. The chain crosses the membrane as a helical span at residues 116-136; sequence SAFVMGLSVIGSVFNITAIAI. Residues 137–155 lie on the Cytoplasmic side of the membrane; that stretch reads NRYCCICHSTTYHRVCSHW. A helical membrane pass occupies residues 156 to 176; that stretch reads YTPIYISLVWLLTLVALVPNF. Residues 177–200 are Extracellular-facing; it reads FVGSLEYDPRIYSCTFIQTASTQY. Residues 201-221 traverse the membrane as a helical segment; the sequence is TAAVVAIHFLLPMAVVSFCYL. At 222–253 the chain is on the cytoplasmic side; it reads RIWVLVLQARRKAKATRKLRLRPSDLRSFLTM. Residues 254-274 traverse the membrane as a helical segment; the sequence is FAVFVVFAICWAPLNCIGLAV. The Extracellular segment spans residues 275-287; that stretch reads AINPEAMALQVPE. A helical membrane pass occupies residues 288–308; sequence GLFVTSYFLAYFNSCLNAIVY. The Cytoplasmic portion of the chain corresponds to 309-364; it reads GLLNQNFRREYKRILLAIWNTRRCIQHASKHCLTEERQGPTPPAARATVPVKEGAL. The disordered stretch occupies residues 343–364; that stretch reads EERQGPTPPAARATVPVKEGAL. The segment covering 352 to 364 has biased composition (low complexity); sequence AARATVPVKEGAL.

The protein belongs to the G-protein coupled receptor 1 family.

Its subcellular location is the cell membrane. Functionally, high affinity receptor for melatonin. The activity of this receptor is mediated by pertussis toxin sensitive G proteins that inhibits adenylate cyclase activity. This chain is Melatonin receptor type 1B (Mtnr1b), found in Mus musculus (Mouse).